Reading from the N-terminus, the 240-residue chain is Pyridoxine 5'-phosphate synthase (240 aa).

Asn-7 contacts 3-amino-2-oxopropyl phosphate. Residue 9 to 10 (DH) participates in 1-deoxy-D-xylulose 5-phosphate binding. Position 18 (Arg-18) interacts with 3-amino-2-oxopropyl phosphate. The active-site Proton acceptor is His-43. 1-deoxy-D-xylulose 5-phosphate contacts are provided by Arg-45 and His-50. Glu-70 (proton acceptor) is an active-site residue. A 1-deoxy-D-xylulose 5-phosphate-binding site is contributed by Thr-100. His-191 functions as the Proton donor in the catalytic mechanism. 3-amino-2-oxopropyl phosphate contacts are provided by residues Gly-192 and 213-214 (GH).

It belongs to the PNP synthase family. Homooctamer; tetramer of dimers.

It is found in the cytoplasm. The enzyme catalyses 3-amino-2-oxopropyl phosphate + 1-deoxy-D-xylulose 5-phosphate = pyridoxine 5'-phosphate + phosphate + 2 H2O + H(+). It functions in the pathway cofactor biosynthesis; pyridoxine 5'-phosphate biosynthesis; pyridoxine 5'-phosphate from D-erythrose 4-phosphate: step 5/5. In terms of biological role, catalyzes the complicated ring closure reaction between the two acyclic compounds 1-deoxy-D-xylulose-5-phosphate (DXP) and 3-amino-2-oxopropyl phosphate (1-amino-acetone-3-phosphate or AAP) to form pyridoxine 5'-phosphate (PNP) and inorganic phosphate. This is Pyridoxine 5'-phosphate synthase from Cyanothece sp. (strain PCC 7425 / ATCC 29141).